Consider the following 224-residue polypeptide: Deoxyribose-phosphate aldolase (224 aa).

Residue D92 is the Proton donor/acceptor of the active site. The active-site Schiff-base intermediate with acetaldehyde is the K155. K184 acts as the Proton donor/acceptor in catalysis.

Belongs to the DeoC/FbaB aldolase family. DeoC type 1 subfamily.

It is found in the cytoplasm. It carries out the reaction 2-deoxy-D-ribose 5-phosphate = D-glyceraldehyde 3-phosphate + acetaldehyde. Its pathway is carbohydrate degradation; 2-deoxy-D-ribose 1-phosphate degradation; D-glyceraldehyde 3-phosphate and acetaldehyde from 2-deoxy-alpha-D-ribose 1-phosphate: step 2/2. Catalyzes a reversible aldol reaction between acetaldehyde and D-glyceraldehyde 3-phosphate to generate 2-deoxy-D-ribose 5-phosphate. This is Deoxyribose-phosphate aldolase from Clostridium perfringens (strain SM101 / Type A).